The primary structure comprises 388 residues: DNA ADP-ribosyl transferase-DNA ADP-ribosyl glycohydrolase fusion protein (388 aa).

Residues 6–197 (RELYYITHID…PVIPDPTFFF (192 aa)) form the DarT domain. NAD(+) is bound by residues 10–12 (YIT) and arginine 50. Residues 34 to 52 (QSINCKKVYDNSIVLKRKS) form an NAD(+)-binding element region. Arginine 50 (proton acceptor) is an active-site residue. The ADP-ribosylating turn-turn loop stretch occupies residues 107–152 (TDGNAASSETQIYRKSEIKNIKNIISVKDMEYWREEDGSKRKIMAE). The active site involves glutamate 152. The 181-residue stretch at 196–376 (FFLPNREIKL…IYLPLEKRIP (181 aa)) folds into the Macro domain. ADP-D-ribose-binding positions include 215–216 (DM), 227–229 (SVN), threonine 301, 339–343 (GCGLG), and 371–372 (LE).

It in the N-terminal section; belongs to the DarT ADP-ribosyltransferase family. In the C-terminal section; belongs to the DarG ADP-ribosyl glycohydrolase family.

The catalysed reaction is an N-(ADP-alpha-D-ribosyl)-thymidine in DNA + H2O = a thymidine in DNA + ADP-D-ribose. It catalyses the reaction a thymidine in DNA + NAD(+) = an N-(ADP-alpha-D-ribosyl)-thymidine in DNA + nicotinamide + H(+). Functionally, a fusion protein of the toxic and antitoxin components of a hybrid type II/IV toxin-antitoxin (TA) system. The N-terminal domain ADP-ribosylates ssDNA on a thymidine residue, while the C-terminal domain removes the modification, neutralizing the toxic effect. The sequence is that of DNA ADP-ribosyl transferase-DNA ADP-ribosyl glycohydrolase fusion protein from Thermosipho africanus (strain H17ap60334).